Reading from the N-terminus, the 433-residue chain is Putative ankyrin repeat protein R578 (433 aa).

ANK repeat units lie at residues 166 to 195 (NKEI…ILSE), 197 to 224 (DHLI…LSKL), 356 to 386 (VNPN…DIHS), and 388 to 415 (PSLI…ICDE).

The polypeptide is Putative ankyrin repeat protein R578 (Acanthamoeba polyphaga mimivirus (APMV)).